The primary structure comprises 367 residues: Leu/Ile/Val-binding protein (367 aa).

A signal peptide spans 1 to 23; that stretch reads MNMKGKALLAGCIALSLSNMAFA. An intrachain disulfide couples C76 to C101.

The protein belongs to the leucine-binding protein family.

It is found in the periplasm. Its function is as follows. This protein is a component of the leucine, isoleucine, valine, (threonine) transport system, which is one of the two periplasmic binding protein-dependent transport systems of the high-affinity transport of the branched-chain amino acids. The polypeptide is Leu/Ile/Val-binding protein (livJ) (Citrobacter freundii).